The sequence spans 595 residues: Indole-3-acetic acid-amido synthetase GH3.3 (595 aa).

Belongs to the IAA-amido conjugating enzyme family.

Functionally, catalyzes the synthesis of indole-3-acetic acid (IAA)-amino acid conjugates, providing a mechanism for the plant to cope with the presence of excess auxin. Strongly reactive with Glu, Gln, Trp, Asp, Ala, Leu, Phe, Gly, Tyr, Met, Ile and Val. Little or no product formation with His, Ser, Thr, Arg, Lys, or Cys. Also active on pyruvic and butyric acid analogs of IAA, PAA and the synthetic auxin naphthaleneacetic acid (NAA). The two chlorinated synthetic auxin herbicides 2,4-D and 3,6-dichloro-o-anisic acid (dicamba) cannot be used as substrates. This is Indole-3-acetic acid-amido synthetase GH3.3 (GH3.3) from Arabidopsis thaliana (Mouse-ear cress).